A 451-amino-acid chain; its full sequence is 1,3-beta-glucanosyltransferase PGA4 (451 aa).

The N-terminal stretch at 1-18 is a signal peptide; the sequence is MLFRSLVTYLSLVSSVLS. Residue Tyr-81 coordinates (1,3-beta-D-glucosyl)n. A glycan (N-linked (GlcNAc...) asparagine) is linked at Asn-88. (1,3-beta-D-glucosyl)n-binding positions include 108 to 116, Asn-151, Glu-152, and Arg-198; that span reads NTPHSSITR. The active-site Proton donor is the Glu-152. The N-linked (GlcNAc...) asparagine glycan is linked to Asn-245. The active-site Nucleophile is Glu-254. Tyr-286 is a (1,3-beta-D-glucosyl)n binding site. Residues 316–336 form a disordered region; the sequence is SQFEKTKNPSGDGGYLKSTGG. 3 N-linked (GlcNAc...) asparagine glycosylation sites follow: Asn-347, Asn-394, and Asn-422. Positions 395–427 are disordered; that stretch reads YTSSITASSRASPSQTSQVSSSSATSANSTSSK. Positions 396 to 426 are enriched in low complexity; the sequence is TSSITASSRASPSQTSQVSSSSATSANSTSS. The GPI-anchor amidated aspartate moiety is linked to residue Asp-430. Residues 431 to 451 constitute a propeptide, removed in mature form; sequence AAVEGAGFLSVIALAAGIALL.

Belongs to the glycosyl hydrolase 72 family. In terms of processing, the GPI-anchor is attached to the protein in the endoplasmic reticulum and serves to target the protein to the cell surface. There, the glucosamine-inositol phospholipid moiety is cleaved off and the GPI-modified mannoprotein is covalently attached via its lipidless GPI glycan remnant to the 1,6-beta-glucan of the outer cell wall layer.

It localises to the secreted. The protein localises to the cell wall. The protein resides in the membrane. Splits internally a 1,3-beta-glucan molecule and transfers the newly generated reducing end (the donor) to the non-reducing end of another 1,3-beta-glucan molecule (the acceptor) forming a 1,3-beta linkage, resulting in the elongation of 1,3-beta-glucan chains in the cell wall. Involved in cell wall biosynthesis and morphogenesis. Plays a key role in virulence. The chain is 1,3-beta-glucanosyltransferase PGA4 (PGA4) from Candida albicans (strain SC5314 / ATCC MYA-2876) (Yeast).